We begin with the raw amino-acid sequence, 173 residues long: Photosystem I assembly protein Ycf3 (173 aa).

3 TPR repeats span residues 35-68, 72-105, and 120-153; these read AYVY…EENS, SETL…NPNQ, and GRIA…NPGG.

It belongs to the Ycf3 family.

The protein localises to the cellular thylakoid membrane. In terms of biological role, essential for the assembly of the photosystem I (PSI) complex. May act as a chaperone-like factor to guide the assembly of the PSI subunits. This Synechococcus sp. (strain CC9605) protein is Photosystem I assembly protein Ycf3.